The primary structure comprises 261 residues: General secretion pathway protein N (261 aa).

Residues 1 to 10 (MRLEMIGLRT) lie on the Cytoplasmic side of the membrane. A helical transmembrane segment spans residues 11–31 (WLLATVVGWALLVCVLAVAGL). Residues 32 to 261 (GKRVELLPDD…QGGSTPGQTQ (230 aa)) are Periplasmic-facing. The interval 158–261 (VFNGQGGQPP…QGGSTPGQTQ (104 aa)) is disordered. The span at 179 to 200 (AVPPLPPNVPPAPATPAPPPAE) shows a compositional bias: pro residues. Low complexity predominate over residues 201–211 (VPQQQPGGQAP). The span at 227 to 244 (RPSDEQMRAIRERIEARR) shows a compositional bias: basic and acidic residues.

Binds to XpsD.

Its subcellular location is the cell inner membrane. Functionally, involved in a general secretion pathway (GSP) for the export of proteins. This chain is General secretion pathway protein N (xpsN), found in Xanthomonas campestris pv. campestris (strain ATCC 33913 / DSM 3586 / NCPPB 528 / LMG 568 / P 25).